Here is a 568-residue protein sequence, read N- to C-terminus: MTHSVEDIKSTSRRLRGSLEQSLADPVTGALREDDQTLIKYHGSYQQDDRDIRDERRRQKLEPAYQFMIRTRTPGGVISPSQWLALDGIATRYANHSLRITTRQAFQFHGVIKRELKATMQAINATLIDTLAACGDVNRNVQVAANPLRSQAHATLYADAARVSEHLLPNTRAYYEIWLDEERVSGSGAEDEPIYGDRYLPRKFKIGFAAPPHNDVDVFANDLGFIAILREGQLLGYNVSIGGGMGASHGDAETWPRVANVIGFVTGDQLLDIATAVVTTQRDLGNRAVRKRARFKYTIDDHGLDTIVAEIERRAGFSLQPAQPFAFAHNGDRYGWVEGEQGDWHLTLSLPAGRIADTDTAAHLSGLRAIAQLQMGEFRMTPNQNLVIAGVPAEQRAQIDQLVAQYGLDAGNLAPTALARGAMACVALPTCGLAMAEAERYLPDFSAALQPLLERHGLAQTPIVLRLSGCPNGCSRPYLAEIALVGKAPGRYNLMLGGDRRGQRLNTLYRENINEADILAALEPLLARYAAERDRHTDEGFGDFLHRSGLIALPPYPTHRHLDLELLA.

C425, C431, C470, and C474 together coordinate [4Fe-4S] cluster. C474 is a binding site for siroheme.

This sequence belongs to the nitrite and sulfite reductase 4Fe-4S domain family. Alpha(8)-beta(8). The alpha component is a flavoprotein, the beta component is a hemoprotein. Siroheme serves as cofactor. The cofactor is [4Fe-4S] cluster.

The catalysed reaction is hydrogen sulfide + 3 NADP(+) + 3 H2O = sulfite + 3 NADPH + 4 H(+). Its pathway is sulfur metabolism; hydrogen sulfide biosynthesis; hydrogen sulfide from sulfite (NADPH route): step 1/1. Functionally, component of the sulfite reductase complex that catalyzes the 6-electron reduction of sulfite to sulfide. This is one of several activities required for the biosynthesis of L-cysteine from sulfate. In Xanthomonas campestris pv. campestris (strain ATCC 33913 / DSM 3586 / NCPPB 528 / LMG 568 / P 25), this protein is Sulfite reductase [NADPH] hemoprotein beta-component.